A 361-amino-acid chain; its full sequence is Serine/threonine-protein kinase SRK2B (361 aa).

One can recognise a Protein kinase domain in the interval tyrosine 4 to phenylalanine 260. ATP contacts are provided by residues isoleucine 10–alanine 18 and lysine 33. Aspartate 123 serves as the catalytic Proton acceptor. Phosphoserine is present on serine 154. Residues alanine 311–serine 361 form a disordered region. Residues glutamate 318 to tyrosine 344 show a composition bias toward acidic residues.

The protein belongs to the protein kinase superfamily. Ser/Thr protein kinase family. Expressed in seedlings.

The catalysed reaction is L-seryl-[protein] + ATP = O-phospho-L-seryl-[protein] + ADP + H(+). It catalyses the reaction L-threonyl-[protein] + ATP = O-phospho-L-threonyl-[protein] + ADP + H(+). This chain is Serine/threonine-protein kinase SRK2B (SRK2B), found in Arabidopsis thaliana (Mouse-ear cress).